We begin with the raw amino-acid sequence, 142 residues long: Hemoglobin subunit alpha-4 (142 aa).

The Globin domain maps to 2-142 (VLSAADKSNV…VSTVLTSKYR (141 aa)). Histidine 59 provides a ligand contact to O2. Histidine 88 is a heme b binding site.

The protein belongs to the globin family. As to quaternary structure, heterotetramer of two alpha chains and two beta chains. Red blood cells.

In terms of biological role, involved in oxygen transport from the lung to the various peripheral tissues. This is Hemoglobin subunit alpha-4 from Bubalus bubalis (Domestic water buffalo).